A 793-amino-acid chain; its full sequence is DNA mismatch repair protein MutS (793 aa).

589 to 596 (GPNMSGKS) serves as a coordination point for ATP.

It belongs to the DNA mismatch repair MutS family.

Functionally, this protein is involved in the repair of mismatches in DNA. It is possible that it carries out the mismatch recognition step. This protein has a weak ATPase activity. The polypeptide is DNA mismatch repair protein MutS (Thermotoga petrophila (strain ATCC BAA-488 / DSM 13995 / JCM 10881 / RKU-1)).